The primary structure comprises 582 residues: Aspartate--tRNA ligase (582 aa).

Glu-174 is a binding site for L-aspartate. Positions 198–201 (QITK) are aspartate. Arg-220 contacts L-aspartate. ATP is bound by residues 220 to 222 (RDE) and Gln-229. L-aspartate is bound at residue His-443. Glu-477 contacts ATP. Arg-484 contributes to the L-aspartate binding site. 529–532 (GLDR) provides a ligand contact to ATP.

It belongs to the class-II aminoacyl-tRNA synthetase family. Type 1 subfamily. In terms of assembly, homodimer.

Its subcellular location is the cytoplasm. The enzyme catalyses tRNA(Asp) + L-aspartate + ATP = L-aspartyl-tRNA(Asp) + AMP + diphosphate. Its function is as follows. Catalyzes the attachment of L-aspartate to tRNA(Asp) in a two-step reaction: L-aspartate is first activated by ATP to form Asp-AMP and then transferred to the acceptor end of tRNA(Asp). This Streptococcus pyogenes serotype M28 (strain MGAS6180) protein is Aspartate--tRNA ligase.